Consider the following 398-residue polypeptide: Elongation factor Tu (398 aa).

Residues 10–207 enclose the tr-type G domain; it reads KIHLNVGTIG…ILDKNIPVPN (198 aa). A G1 region spans residues 19–26; sequence GHVDHGKT. 19–26 provides a ligand contact to GTP; that stretch reads GHVDHGKT. Thr-26 is a binding site for Mg(2+). The segment at 60-64 is G2; that stretch reads GITIS. The segment at 81-84 is G3; that stretch reads DCPG. GTP-binding positions include 81–85 and 136–139; these read DCPGH and NKAD. The G4 stretch occupies residues 136 to 139; it reads NKAD. A G5 region spans residues 174 to 176; sequence SAL.

The protein belongs to the TRAFAC class translation factor GTPase superfamily. Classic translation factor GTPase family. EF-Tu/EF-1A subfamily. As to quaternary structure, monomer.

It localises to the cytoplasm. It catalyses the reaction GTP + H2O = GDP + phosphate + H(+). In terms of biological role, GTP hydrolase that promotes the GTP-dependent binding of aminoacyl-tRNA to the A-site of ribosomes during protein biosynthesis. The polypeptide is Elongation factor Tu (Carsonella ruddii (strain PV)).